The primary structure comprises 545 residues: Autoimmune regulator (545 aa).

The 105-residue stretch at 1 to 105 folds into the HSR domain; sequence MATDAALRRL…ILDSFPKDVD (105 aa). 2 short sequence motifs (LXXLL motif) span residues 7-11 and 63-67; these read LRRLL and LSWLL. Disordered stretches follow at residues 101–178 and 234–290; these read PKDV…LPLG and SKFE…SDPQ. A compositionally biased stretch (pro residues) spans 116-128; the sequence is PAVPKALVPPPRL. The segment covering 140-152 has biased composition (low complexity); sequence AAAPAALTPRGTA. Residues 181–280 form the SAND domain; the sequence is IQTMSASVQR…ARLGQQGSVP (100 aa). Interaction with histone H3 not methylated at 'Lys-4' regions lie at residues 295 to 298, 304 to 312, and 331 to 335; these read NEDE, DGGELICCD, and PSGTW. A PHD-type 1 zinc finger spans residues 296–343; that stretch reads EDECAVCRDGGELICCDGCPRAFHLACLSPPLREIPSGTWRCSSCLQA. Positions 348 to 382 are disordered; that stretch reads VQPRAEEPRPQEPPVETPLPPGLRSAGEEVRGPPG. Over residues 358–368 the composition is skewed to pro residues; sequence QEPPVETPLPP. Positions 414–418 match the LXXLL motif 3 motif; sequence LHPLL. The PHD-type 2 zinc-finger motif lies at 434-475; sequence CGVCGDGTDVLRCTHCAAAFHWRCHFPAGTSRPGTGLRCRSC. Residues 489–508 form a disordered region; sequence APSPARLAPGPAKDDTASHE. An LXXLL motif 4 motif is present at residues 516–520; sequence LESLL.

As to quaternary structure, homodimer and homotetramer. Interacts with CREBBP. Interacts preferentially with histone H3 that is not methylated at 'Lys-4'. Binds with lower affinity to histone H3 that is monomethylated at 'Lys-4'. Trimethylation of histone H3 at 'Lys-4' or phosphorylation at 'Thr-3' abolish the interaction. Binds with lower affinity to histone H3 that is acetylated at 'Lys-4', or that is acetylated at 'Lys-9' or trimethylated at 'Lys-9'. Binds histone H3 that is dimethylated at 'Arg-2' with very low affinity. In terms of processing, phosphorylated. Phosphorylation could trigger oligomerization. Widely expressed. Expressed at higher level in thymus (medullary epithelial cells and monocyte-dendritic cells), pancreas, adrenal cortex and testis. Expressed at lower level in the spleen, fetal liver and lymph nodes. In secondary lymphoid organs, expressed in a discrete population of bone marrow-derived toleregenic antigen presenting cells (APCs) called extrathymic AIRE expressing cells (eTAC)(at protein level). Isoform 2 and isoform 3 seem to be less frequently expressed than isoform 1, if at all.

The protein localises to the nucleus. It localises to the cytoplasm. Functionally, transcription factor playing an essential role to promote self-tolerance in the thymus by regulating the expression of a wide array of self-antigens that have the commonality of being tissue-restricted in their expression pattern in the periphery, called tissue restricted antigens (TRA). Binds to G-doublets in an A/T-rich environment; the preferred motif is a tandem repeat of 5'-ATTGGTTA-3' combined with a 5'-TTATTA-3' box. Binds to nucleosomes. Binds to chromatin and interacts selectively with histone H3 that is not methylated at 'Lys-4', not phosphorylated at 'Thr-3' and not methylated at 'Arg-2'. Functions as a sensor of histone H3 modifications that are important for the epigenetic regulation of gene expression. Mainly expressed by medullary thymic epithelial cells (mTECs), induces the expression of thousands of tissue-restricted proteins, which are presented on major histocompatibility complex class I (MHC-I) and MHC-II molecules to developing T-cells percolating through the thymic medulla. Also induces self-tolerance through other mechanisms such as the regulation of the mTEC differentiation program. Controls the medullary accumulation of thymic dendritic cells and the development of regulatory T-cell through the regulation of XCL1 expression. Regulates the production of CCR4 and CCR7 ligands in medullary thymic epithelial cells and alters the coordinated maturation and migration of thymocytes. In thimic B-cells, allows the presentation of licensing-dependent endogenous self-anitgen for negative selection. In secondary lymphoid organs, induces functional inactivation of CD4(+) T-cells. Expressed by a distinct bone marrow-derived population, induces self-tolerance through a mechanism that does not require regulatory T-cells and is resitant to innate inflammatory stimuli. This chain is Autoimmune regulator (AIRE), found in Homo sapiens (Human).